The following is a 354-amino-acid chain: RH-like protein (354 aa).

The next 8 helical transmembrane spans lie at 11-31 (GCLP…FFFF), 45-65 (VATY…LGFL), 77-97 (VAFN…LDGF), 125-145 (ISVG…MVLV), 167-187 (VNIM…AWCL), 209-229 (AMLG…ALLT), 238-258 (VFNT…VSSL), and 287-307 (LISS…ISIG).

The protein belongs to the ammonium transporter (TC 2.A.49) family. Rh subfamily.

The protein localises to the membrane. May be part of an oligomeric complex which is likely to have a transport or channel function in the erythrocyte membrane. The sequence is that of RH-like protein from Hylobates pileatus (Pileated gibbon).